A 648-amino-acid polypeptide reads, in one-letter code: Beta-glucuronidase (648 aa).

Residues glycine 1–alanine 19 form the signal peptide. Asparagine 170, asparagine 269, and asparagine 417 each carry an N-linked (GlcNAc...) asparagine glycan. Glutamate 448 functions as the Proton donor in the catalytic mechanism. Asparagine 628 carries N-linked (GlcNAc...) asparagine glycosylation.

The protein belongs to the glycosyl hydrolase 2 family. Homotetramer.

It localises to the lysosome. It catalyses the reaction a beta-D-glucuronoside + H2O = D-glucuronate + an alcohol. Its activity is regulated as follows. Inhibited by L-aspartic acid. Its function is as follows. Plays an important role in the degradation of dermatan and keratan sulfates. This Chlorocebus aethiops (Green monkey) protein is Beta-glucuronidase (GUSB).